Here is a 606-residue protein sequence, read N- to C-terminus: Alpha-1,2-mannosyltransferase MNN23 (606 aa).

Over 1–14 (MSINFLSIPRNRFK) the chain is Cytoplasmic. Residues 15–35 (AIGVLSVTCILIYVILHSSII) traverse the membrane as a helical segment. At 36 to 606 (TTDFDVSDYG…QVAWLSKSQN (571 aa)) the chain is on the extracellular side. The segment at 59–86 (DNGENLKDPQPELDNDKGNGETDTTTSN) is disordered. Residues 62-78 (ENLKDPQPELDNDKGNG) are compositionally biased toward basic and acidic residues.

It belongs to the MNN1/MNT family.

It is found in the golgi apparatus membrane. The protein operates within protein modification; protein glycosylation. Functionally, alpha-1,2-mannosyltransferase required for cell wall integrity. Responsible for addition of the first alpha-1,2-linked mannose to form the branches on the mannan backbone of oligosaccharides. Addition of alpha-1,2-mannose is required for stabilization of the alpha-1,6-mannose backbone and hence regulates mannan fibril length; and is important for both immune recognition and virulence. The chain is Alpha-1,2-mannosyltransferase MNN23 (MNN23) from Candida albicans (strain SC5314 / ATCC MYA-2876) (Yeast).